Consider the following 326-residue polypeptide: Beta-ketoacyl-[acyl-carrier-protein] synthase III (326 aa).

Residues C120 and H253 contribute to the active site. The tract at residues 254 to 258 (QANIR) is ACP-binding. N283 is an active-site residue.

The protein belongs to the thiolase-like superfamily. FabH family. As to quaternary structure, homodimer.

The protein resides in the cytoplasm. It carries out the reaction malonyl-[ACP] + acetyl-CoA + H(+) = 3-oxobutanoyl-[ACP] + CO2 + CoA. It functions in the pathway lipid metabolism; fatty acid biosynthesis. Its function is as follows. Catalyzes the condensation reaction of fatty acid synthesis by the addition to an acyl acceptor of two carbons from malonyl-ACP. Catalyzes the first condensation reaction which initiates fatty acid synthesis and may therefore play a role in governing the total rate of fatty acid production. Possesses both acetoacetyl-ACP synthase and acetyl transacylase activities. Its substrate specificity determines the biosynthesis of branched-chain and/or straight-chain of fatty acids. This Cupriavidus taiwanensis (strain DSM 17343 / BCRC 17206 / CCUG 44338 / CIP 107171 / LMG 19424 / R1) (Ralstonia taiwanensis (strain LMG 19424)) protein is Beta-ketoacyl-[acyl-carrier-protein] synthase III.